Here is a 164-residue protein sequence, read N- to C-terminus: UPF0178 protein RPD_2254 (164 aa).

It belongs to the UPF0178 family.

The protein is UPF0178 protein RPD_2254 of Rhodopseudomonas palustris (strain BisB5).